We begin with the raw amino-acid sequence, 137 residues long: Nucleoside diphosphate kinase (137 aa).

ATP-binding residues include K9, F57, R85, T91, R102, and N112. Residue H115 is the Pros-phosphohistidine intermediate of the active site.

The protein belongs to the NDK family. In terms of assembly, homotetramer. The cofactor is Mg(2+).

It is found in the cytoplasm. The enzyme catalyses a 2'-deoxyribonucleoside 5'-diphosphate + ATP = a 2'-deoxyribonucleoside 5'-triphosphate + ADP. The catalysed reaction is a ribonucleoside 5'-diphosphate + ATP = a ribonucleoside 5'-triphosphate + ADP. Its function is as follows. Major role in the synthesis of nucleoside triphosphates other than ATP. The ATP gamma phosphate is transferred to the NDP beta phosphate via a ping-pong mechanism, using a phosphorylated active-site intermediate. This chain is Nucleoside diphosphate kinase, found in Campylobacter jejuni subsp. jejuni serotype O:2 (strain ATCC 700819 / NCTC 11168).